The sequence spans 152 residues: Aspartate carbamoyltransferase regulatory chain (152 aa).

Zn(2+) is bound by residues Cys-108, Cys-113, Cys-137, and Cys-140.

The protein belongs to the PyrI family. As to quaternary structure, contains catalytic and regulatory chains. Zn(2+) serves as cofactor.

Its function is as follows. Involved in allosteric regulation of aspartate carbamoyltransferase. This chain is Aspartate carbamoyltransferase regulatory chain, found in Neisseria gonorrhoeae (strain ATCC 700825 / FA 1090).